A 337-amino-acid polypeptide reads, in one-letter code: Holliday junction branch migration complex subunit RuvB (337 aa).

The disordered stretch occupies residues 1 to 20 (MQTRFVSPVNHDEEQDEPSV). The tract at residues 1-181 (MQTRFVSPVN…FGIILRLDLY (181 aa)) is large ATPase domain (RuvB-L). ATP is bound by residues Arg21, Gly62, Lys65, Thr66, Thr67, 128–130 (EDY), Arg171, Tyr181, and Arg218. Thr66 lines the Mg(2+) pocket. The interval 182–252 (DPSELTVIVT…IANTALFALG (71 aa)) is small ATPAse domain (RuvB-S). The head domain (RuvB-H) stretch occupies residues 255 to 337 (QKGLDILDRR…SHTRDLTSFL (83 aa)). DNA-binding residues include Arg310 and Arg315.

The protein belongs to the RuvB family. As to quaternary structure, homohexamer. Forms an RuvA(8)-RuvB(12)-Holliday junction (HJ) complex. HJ DNA is sandwiched between 2 RuvA tetramers; dsDNA enters through RuvA and exits via RuvB. An RuvB hexamer assembles on each DNA strand where it exits the tetramer. Each RuvB hexamer is contacted by two RuvA subunits (via domain III) on 2 adjacent RuvB subunits; this complex drives branch migration. In the full resolvosome a probable DNA-RuvA(4)-RuvB(12)-RuvC(2) complex forms which resolves the HJ.

The protein localises to the cytoplasm. The enzyme catalyses ATP + H2O = ADP + phosphate + H(+). In terms of biological role, the RuvA-RuvB-RuvC complex processes Holliday junction (HJ) DNA during genetic recombination and DNA repair, while the RuvA-RuvB complex plays an important role in the rescue of blocked DNA replication forks via replication fork reversal (RFR). RuvA specifically binds to HJ cruciform DNA, conferring on it an open structure. The RuvB hexamer acts as an ATP-dependent pump, pulling dsDNA into and through the RuvAB complex. RuvB forms 2 homohexamers on either side of HJ DNA bound by 1 or 2 RuvA tetramers; 4 subunits per hexamer contact DNA at a time. Coordinated motions by a converter formed by DNA-disengaged RuvB subunits stimulates ATP hydrolysis and nucleotide exchange. Immobilization of the converter enables RuvB to convert the ATP-contained energy into a lever motion, pulling 2 nucleotides of DNA out of the RuvA tetramer per ATP hydrolyzed, thus driving DNA branch migration. The RuvB motors rotate together with the DNA substrate, which together with the progressing nucleotide cycle form the mechanistic basis for DNA recombination by continuous HJ branch migration. Branch migration allows RuvC to scan DNA until it finds its consensus sequence, where it cleaves and resolves cruciform DNA. The polypeptide is Holliday junction branch migration complex subunit RuvB (Methanospirillum hungatei JF-1 (strain ATCC 27890 / DSM 864 / NBRC 100397 / JF-1)).